The primary structure comprises 141 residues: Large ribosomal subunit protein uL11 (141 aa).

This sequence belongs to the universal ribosomal protein uL11 family. Part of the ribosomal stalk of the 50S ribosomal subunit. Interacts with L10 and the large rRNA to form the base of the stalk. L10 forms an elongated spine to which L12 dimers bind in a sequential fashion forming a multimeric L10(L12)X complex. One or more lysine residues are methylated.

Functionally, forms part of the ribosomal stalk which helps the ribosome interact with GTP-bound translation factors. This Dinoroseobacter shibae (strain DSM 16493 / NCIMB 14021 / DFL 12) protein is Large ribosomal subunit protein uL11.